The sequence spans 301 residues: Ornithine carbamoyltransferase (301 aa).

Carbamoyl phosphate is bound by residues 47 to 50 (STRT), Q74, R98, and 125 to 128 (HPMQ). Residues N156, D220, and 224-225 (SM) contribute to the L-ornithine site. Residues 260–261 (CL) and R288 contribute to the carbamoyl phosphate site.

This sequence belongs to the aspartate/ornithine carbamoyltransferase superfamily. OTCase family.

It is found in the cytoplasm. The catalysed reaction is carbamoyl phosphate + L-ornithine = L-citrulline + phosphate + H(+). It functions in the pathway amino-acid biosynthesis; L-arginine biosynthesis; L-arginine from L-ornithine and carbamoyl phosphate: step 1/3. Its function is as follows. Reversibly catalyzes the transfer of the carbamoyl group from carbamoyl phosphate (CP) to the N(epsilon) atom of ornithine (ORN) to produce L-citrulline. The chain is Ornithine carbamoyltransferase from Picrophilus torridus (strain ATCC 700027 / DSM 9790 / JCM 10055 / NBRC 100828 / KAW 2/3).